Consider the following 370-residue polypeptide: MATKLEAFINDLRLQCETNDTTKYVSIVLFCEKETTLKLFFQYIDGIDTNSEPKLAVLSPTLSPVGYYTKEITTEDGWQVILNITCIPPPWKSSSIDLLPSILKSDPEKSSKRFVLLLDWINEDQSYWLEDIEGLFVQLKQVSPETKAAGSVMMLHSDYCKHLENTHTKWSSTAIDFMHQSLRTLALHLKISLYSDLKNSVLAAKSAVGVPLSTEEQKSLIDMVNLENVNVTYGSDSLNKIAMIDENFPLSVYKDNLSTLKHDFSDVIPEIKPRNMGSCAITEPIKPLPDLQSLIPDVQGQLSHLYELQRKNSSLKRVTNQPAVVQDIGQDNTMALNDIASDNNHLQHVPDDDSALDSLVHGIVQRHQIS.

Belongs to the dynein light intermediate chain DYN3 family. In terms of assembly, the cytoplasmic dynein is composed of at least two heavy chains and a number of intermediate and light chains.

It localises to the cytoplasm. The protein localises to the cytoskeleton. Its function is as follows. Component of the cytoplasmic dynein which acts as a motor for the intracellular retrograde motility of vesicles and organelles along microtubules. May play an important role in the proper orientation of the mitotic spindle into the budding daughter cell yeast. Probably required for normal progression of the cell cycle. The polypeptide is Cytoplasmic dynein intermediate light chain DYN3 (DYN3) (Kluyveromyces lactis (strain ATCC 8585 / CBS 2359 / DSM 70799 / NBRC 1267 / NRRL Y-1140 / WM37) (Yeast)).